A 305-amino-acid chain; its full sequence is Porphobilinogen deaminase (305 aa).

Position 241 is an S-(dipyrrolylmethanemethyl)cysteine (C241).

This sequence belongs to the HMBS family. Monomer. Dipyrromethane is required as a cofactor.

It carries out the reaction 4 porphobilinogen + H2O = hydroxymethylbilane + 4 NH4(+). It participates in porphyrin-containing compound metabolism; protoporphyrin-IX biosynthesis; coproporphyrinogen-III from 5-aminolevulinate: step 2/4. Tetrapolymerization of the monopyrrole PBG into the hydroxymethylbilane pre-uroporphyrinogen in several discrete steps. This is Porphobilinogen deaminase from Exiguobacterium sp. (strain ATCC BAA-1283 / AT1b).